A 256-amino-acid chain; its full sequence is Autophagy-related protein 40 (256 aa).

Residues 1-16 (MFNLILWPLFLLTSVA) form the signal peptide. Residues 17–67 (IPLQLTLEVVYLTSSVDFSKASAAKTATSLGQSPVVITIYKSLLKYWSLYE) are Lumenal-facing. Residues 68–88 (FIHFIYLYTPIDAFLNFLPFT) traverse the membrane as a helical segment. Residues 89–256 (SLLMSFGSIC…DILDETTELD (168 aa)) are Cytoplasmic-facing. A disordered region spans residues 197-243 (QPQGDKNRYQNGDRESTKNGAAYQKSSQQSSSFEQNFTSTEFPNDYD). Residues 199 to 213 (QGDKNRYQNGDREST) show a composition bias toward basic and acidic residues. The segment covering 222–238 (SSQQSSSFEQNFTSTEF) has biased composition (low complexity). The short motif at 242–245 (YDFM) is the ATG8-binding element.

Interacts with ATG8 and ATG11.

It is found in the endoplasmic reticulum membrane. The protein resides in the preautophagosomal structure membrane. Its function is as follows. Acts as a receptor for reticulophagy. Directs autophagic sequestration of folded tubules/sheets derived from the cortical endoplasmic reticulum (cER) and the cytoplasmic endoplasmic reticulum (cytoER) into autophagosomes. Is not required for the cytoplasm-to-vacuole targeting pathway, mitophagy, pexophagy, and non-selective autophagy. The chain is Autophagy-related protein 40 from Saccharomyces cerevisiae (strain ATCC 204508 / S288c) (Baker's yeast).